A 2145-amino-acid polypeptide reads, in one-letter code: Glutamate synthase [NADH] (2145 aa).

The propeptide occupies Met-1–Ala-53. Residue Cys-54 is the For GATase activity of the active site. The Glutamine amidotransferase type-2 domain occupies Cys-54 to Gln-455. Leu-1132–Arg-1189 provides a ligand contact to FMN. Residues Cys-1185, Cys-1191, and Cys-1196 each coordinate [3Fe-4S] cluster. Positions Lys-1551 to Glu-1600 form a coiled coil. Gly-1928–Arg-1942 contacts NAD(+). The residue at position 2070 (Thr-2070) is a Phosphothreonine.

The protein belongs to the glutamate synthase family. Homotrimer. It depends on [3Fe-4S] cluster as a cofactor. Requires FAD as cofactor. FMN is required as a cofactor.

It catalyses the reaction 2 L-glutamate + NAD(+) = L-glutamine + 2-oxoglutarate + NADH + H(+). Its pathway is amino-acid biosynthesis; L-glutamate biosynthesis via GLT pathway; L-glutamate from 2-oxoglutarate and L-glutamine (NAD(+) route): step 1/1. The protein operates within energy metabolism; nitrogen metabolism. With respect to regulation, inhibited by homocysteine sulfonamide. Functionally, forms L-glutamate from L-glutamine and 2-oxoglutarate. Represents an alternative pathway to L-glutamate dehydrogenase for the biosynthesis of L-glutamate. Participates with glutamine synthetase in ammonia assimilation processes. The enzyme is specific for NADH, L-glutamine and 2-oxoglutarate. This Saccharomyces cerevisiae (strain ATCC 204508 / S288c) (Baker's yeast) protein is Glutamate synthase [NADH] (GLT1).